Reading from the N-terminus, the 458-residue chain is Tol-Pal system protein TolB (458 aa).

The signal sequence occupies residues 1-23 (MSSVIRKWALTALMAVSSTALFA).

Belongs to the TolB family. As to quaternary structure, the Tol-Pal system is composed of five core proteins: the inner membrane proteins TolA, TolQ and TolR, the periplasmic protein TolB and the outer membrane protein Pal. They form a network linking the inner and outer membranes and the peptidoglycan layer.

It localises to the periplasm. Part of the Tol-Pal system, which plays a role in outer membrane invagination during cell division and is important for maintaining outer membrane integrity. This Zymomonas mobilis subsp. mobilis (strain ATCC 31821 / ZM4 / CP4) protein is Tol-Pal system protein TolB.